The sequence spans 106 residues: Immunoglobulin lambda constant 7 (106 aa).

The 95-residue stretch at Pro-7–Ala-101 folds into the Ig-like domain. A disulfide bond links Cys-28 and Cys-87.

In terms of assembly, immunoglobulins are composed of two identical heavy chains and two identical light chains; disulfide-linked.

The protein resides in the secreted. It localises to the cell membrane. Its function is as follows. Constant region of immunoglobulin light chains. Immunoglobulins, also known as antibodies, are membrane-bound or secreted glycoproteins produced by B lymphocytes. In the recognition phase of humoral immunity, the membrane-bound immunoglobulins serve as receptors which, upon binding of a specific antigen, trigger the clonal expansion and differentiation of B lymphocytes into immunoglobulins-secreting plasma cells. Secreted immunoglobulins mediate the effector phase of humoral immunity, which results in the elimination of bound antigens. The antigen binding site is formed by the variable domain of one heavy chain, together with that of its associated light chain. Thus, each immunoglobulin has two antigen binding sites with remarkable affinity for a particular antigen. The variable domains are assembled by a process called V-(D)-J rearrangement and can then be subjected to somatic hypermutations which, after exposure to antigen and selection, allow affinity maturation for a particular antigen. In Homo sapiens (Human), this protein is Immunoglobulin lambda constant 7.